The primary structure comprises 320 residues: Heptaprenyl diphosphate synthase component 2 (320 aa).

Residues Lys45, Arg48, and His77 each coordinate isopentenyl diphosphate. Residues Asp84 and Asp88 each coordinate Mg(2+). Arg93 contacts all-trans-hexaprenyl diphosphate. Residue Arg94 coordinates isopentenyl diphosphate. 3 residues coordinate all-trans-hexaprenyl diphosphate: Lys170, Thr171, and Gln208.

This sequence belongs to the FPP/GGPP synthase family. Heterodimer of component I and II. Mg(2+) serves as cofactor.

The enzyme catalyses 4 isopentenyl diphosphate + (2E,6E)-farnesyl diphosphate = all-trans-heptaprenyl diphosphate + 4 diphosphate. Functionally, supplies heptaprenyl diphosphate, the precursor for the side chain of the isoprenoid quinone menaquinone-7 (MQ-7). The polypeptide is Heptaprenyl diphosphate synthase component 2 (hepT) (Geobacillus stearothermophilus (Bacillus stearothermophilus)).